A 188-amino-acid polypeptide reads, in one-letter code: dCTP deaminase (188 aa).

Residues 111–116, 135–137, Q156, Y170, and Q180 each bind dCTP; these read KSTYAR and TLE. The Proton donor/acceptor role is filled by E137.

Belongs to the dCTP deaminase family. As to quaternary structure, homotrimer.

It catalyses the reaction dCTP + H2O + H(+) = dUTP + NH4(+). It functions in the pathway pyrimidine metabolism; dUMP biosynthesis; dUMP from dCTP (dUTP route): step 1/2. In terms of biological role, catalyzes the deamination of dCTP to dUTP. This chain is dCTP deaminase, found in Neisseria meningitidis serogroup B (strain ATCC BAA-335 / MC58).